Reading from the N-terminus, the 594-residue chain is UV-stimulated scaffold protein A homolog (594 aa).

The VHS-like stretch occupies residues 24–170; it reads RKNLNRFIRE…VTLKKTKFVD (147 aa). Residues 170–198 are a coiled coil; sequence DYENGAKKIEAERKRKKILEERKMKMIEN. Residues 466 to 493 form a UVSSA-type zinc finger; sequence RKVCLAKMKSGKLCPRKDYYTCPLHGKI. 4 residues coordinate Zn(2+): Cys-469, Cys-479, Cys-487, and His-490. The stretch at 503 to 540 forms a coiled coil; that stretch reads INEEDRLEENYRKEQNHLKEADKIRQMIEKEYESKTKR. Residues 533-558 form a disordered region; that stretch reads EYESKTKRRKKHDVDTTASEDVRNRL. Basic and acidic residues predominate over residues 544 to 558; the sequence is HDVDTTASEDVRNRL.

It belongs to the UVSSA family.

It is found in the chromosome. In terms of biological role, factor involved in transcription-coupled nucleotide excision repair (TC-NER) in response to UV damage. TC-NER allows RNA polymerase II-blocking lesions to be rapidly removed from the transcribed strand of active genes. This Caenorhabditis elegans protein is UV-stimulated scaffold protein A homolog.